Here is a 317-residue protein sequence, read N- to C-terminus: ATP synthase gamma chain (317 aa).

The protein belongs to the ATPase gamma chain family. As to quaternary structure, F-type ATPases have 2 components, CF(1) - the catalytic core - and CF(0) - the membrane proton channel. CF(1) has five subunits: alpha(3), beta(3), gamma(1), delta(1), epsilon(1). CF(0) has three main subunits: a, b and c.

It localises to the cellular thylakoid membrane. Its function is as follows. Produces ATP from ADP in the presence of a proton gradient across the membrane. The gamma chain is believed to be important in regulating ATPase activity and the flow of protons through the CF(0) complex. The polypeptide is ATP synthase gamma chain (Synechococcus sp. (strain CC9311)).